The chain runs to 287 residues: tRNA selenocysteine 1-associated protein 1 (287 aa).

2 RRM domains span residues 3 to 86 (ASLW…YVTY) and 96 to 175 (YSLF…VAIP).

Belongs to the RRM TRSPAP family. As to quaternary structure, component of the tRNA(Sec) complex composed at least of EEFSEC, SECISBP2, SEPHS1, SEPSECS, TRNAU1AP and tRNA(Sec). Found in a complex with tRNA(Sec). Interacts with SEPSECS. Associates with mRNP and/or polysomes. Found in a complex with EEFSEC, SECISBP2, TRNAU1AP and tRNA(Sec).

It is found in the nucleus. The protein resides in the cytoplasm. Functionally, involved in the early steps of selenocysteine biosynthesis and tRNA(Sec) charging to the later steps resulting in the cotranslational incorporation of selenocysteine into selenoproteins. Stabilizes the SECISBP2, EEFSEC and tRNA(Sec) complex. May be involved in the methylation of tRNA(Sec). Enhances efficiency of selenoproteins synthesis. This chain is tRNA selenocysteine 1-associated protein 1 (TRNAU1AP), found in Pongo abelii (Sumatran orangutan).